Consider the following 794-residue polypeptide: Transcription factor TOG1 (794 aa).

Zn(2+)-binding residues include cysteine 18, cysteine 21, cysteine 28, cysteine 34, cysteine 37, and cysteine 44. A DNA-binding region (zn(2)-C6 fungal-type) is located at residues 18–44; it reads CDRCHRKKIKCNSKKPCFGCIGSQSKC.

The protein resides in the nucleus. Its function is as follows. Transcriptional activator required for growth on non-fermentable carbon sources and that regulates genes involved in fatty acid utilization. Acts as a direct activator that binds the promoters of oleate utilizing genes, encoded key enzymes in beta-oxidation and NADPH regeneration (POX1, FOX2,POT1 and IDP2), the glyoxylate shunt (MLS1 and ICL1), and gluconeogenesis (PCK1 and FBP1). Also regulates the abundance of peroxisomes that are vital for fatty acid oxidation. The sequence is that of Transcription factor TOG1 from Saccharomyces cerevisiae (strain ATCC 204508 / S288c) (Baker's yeast).